Consider the following 383-residue polypeptide: Flagellum-associated coiled-coil domain-containing protein 1 (383 aa).

The disordered stretch occupies residues 26-79 (PYPLPKHPTGKFKPVLPPPISKEHNSLLSQPGKSTVSPRDKVQSGNTESSKAPS). A compositionally biased stretch (polar residues) spans 51-77 (SLLSQPGKSTVSPRDKVQSGNTESSKA). 2 coiled-coil regions span residues 125-220 (TDII…YLKS) and 276-359 (KKMN…FQTK). Lys354 bears the N6-acetyllysine mark.

In terms of tissue distribution, isoform 1 is specific to germ cells of the testis and localizes to the principal piece of the sperm flagellum. Isoform 2 seems to be expressed mainly in somatic cells of the testis, and is not detected in mature spermatozoa (at protein level). Isoform 2 may also be expressed weakly in brain.

It is found in the cytoplasm. It localises to the cytoplasmic granule. Its subcellular location is the cell projection. The protein localises to the cilium. The protein resides in the flagellum. The sequence is that of Flagellum-associated coiled-coil domain-containing protein 1 from Mus musculus (Mouse).